The sequence spans 353 residues: Ferrochelatase (353 aa).

2 residues coordinate Fe cation: His-223 and Glu-304.

This sequence belongs to the ferrochelatase family.

It localises to the cytoplasm. It catalyses the reaction heme b + 2 H(+) = protoporphyrin IX + Fe(2+). It participates in porphyrin-containing compound metabolism; protoheme biosynthesis; protoheme from protoporphyrin-IX: step 1/1. Its function is as follows. Catalyzes the ferrous insertion into protoporphyrin IX. This Mesorhizobium japonicum (strain LMG 29417 / CECT 9101 / MAFF 303099) (Mesorhizobium loti (strain MAFF 303099)) protein is Ferrochelatase.